The chain runs to 263 residues: 4-hydroxy-tetrahydrodipicolinate reductase (263 aa).

NAD(+) contacts are provided by residues glycine 7–methionine 12, glycine 96–threonine 98, and alanine 122–phenylalanine 125. The Proton donor/acceptor role is filled by histidine 152. Histidine 153 provides a ligand contact to (S)-2,3,4,5-tetrahydrodipicolinate. Lysine 156 functions as the Proton donor in the catalytic mechanism. Glycine 162–threonine 163 contacts (S)-2,3,4,5-tetrahydrodipicolinate.

Belongs to the DapB family.

The protein resides in the cytoplasm. The enzyme catalyses (S)-2,3,4,5-tetrahydrodipicolinate + NAD(+) + H2O = (2S,4S)-4-hydroxy-2,3,4,5-tetrahydrodipicolinate + NADH + H(+). It catalyses the reaction (S)-2,3,4,5-tetrahydrodipicolinate + NADP(+) + H2O = (2S,4S)-4-hydroxy-2,3,4,5-tetrahydrodipicolinate + NADPH + H(+). It functions in the pathway amino-acid biosynthesis; L-lysine biosynthesis via DAP pathway; (S)-tetrahydrodipicolinate from L-aspartate: step 4/4. Its function is as follows. Catalyzes the conversion of 4-hydroxy-tetrahydrodipicolinate (HTPA) to tetrahydrodipicolinate. This Listeria innocua serovar 6a (strain ATCC BAA-680 / CLIP 11262) protein is 4-hydroxy-tetrahydrodipicolinate reductase.